A 249-amino-acid polypeptide reads, in one-letter code: Triosephosphate isomerase (249 aa).

Substrate contacts are provided by N12 and K14. N6-acetyllysine is present on K14. Y68 is modified (3'-nitrotyrosine). S80 carries the phosphoserine modification. H96 (electrophile) is an active-site residue. S106 bears the Phosphoserine mark. K142 is covalently cross-linked (Glycyl lysine isopeptide (Lys-Gly) (interchain with G-Cter in SUMO1)). K149 is subject to N6-succinyllysine. N6-acetyllysine; alternate is present on K156. K156 is subject to N6-succinyllysine; alternate. The active-site Proton acceptor is E166. T173 bears the Phosphothreonine mark. At K194 the chain carries N6-acetyllysine; alternate. K194 is modified (N6-succinyllysine; alternate). N6-methyllysine; alternate is present on K194. S198 is modified (phosphoserine). Position 209 is a 3'-nitrotyrosine (Y209). Position 212 is a phosphoserine (S212). T214 is subject to Phosphothreonine. The residue at position 223 (S223) is a Phosphoserine. Position 238 is an N6-acetyllysine (K238).

It belongs to the triosephosphate isomerase family. In terms of assembly, homodimer.

The protein resides in the cytoplasm. The catalysed reaction is dihydroxyacetone phosphate = methylglyoxal + phosphate. It catalyses the reaction D-glyceraldehyde 3-phosphate = dihydroxyacetone phosphate. The protein operates within carbohydrate degradation; glycolysis; D-glyceraldehyde 3-phosphate from glycerone phosphate: step 1/1. It participates in carbohydrate biosynthesis; gluconeogenesis. Its function is as follows. Triosephosphate isomerase is an extremely efficient metabolic enzyme that catalyzes the interconversion between dihydroxyacetone phosphate (DHAP) and D-glyceraldehyde-3-phosphate (G3P) in glycolysis and gluconeogenesis. It is also responsible for the non-negligible production of methylglyoxal a reactive cytotoxic side-product that modifies and can alter proteins, DNA and lipids. This is Triosephosphate isomerase (Tpi1) from Rattus norvegicus (Rat).